An 89-amino-acid polypeptide reads, in one-letter code: MEYQYPLDYDWSNEEMITVVKFYEAIERANEKGIVKEELMDLYRKFKQIVPSKAEEKKIDKEFQEVSGYSIYRTIQKGKDTEEHKIVKM.

The protein belongs to the UPF0223 family.

The protein is UPF0223 protein Bcer98_2663 of Bacillus cytotoxicus (strain DSM 22905 / CIP 110041 / 391-98 / NVH 391-98).